We begin with the raw amino-acid sequence, 300 residues long: Fatty acid elongase 3 (300 aa).

3 helical membrane-spanning segments follow: residues 31–51 (VPAVAVVLYLILVLYVPENVM), 61–81 (FLNMLWNLLLTVFSICGAYYC), and 127–147 (IFFDGFVGLWVAAFVLSKIPE). Residues 165 to 169 (HWYHH) carry the HxxHH motif motif. His168 acts as the Nucleophile in catalysis. A run of 4 helical transmembrane segments spans residues 170-190 (ATVMLFCWHAYAYTISSGLWF), 192-212 (TMNYCVHSIMYFYYFMCACGM), 219-239 (IAPLITMMQILQMVAGTLIVL), and 261-283 (MGLLMYVSYLFLFSQLYYRSYIS).

The protein belongs to the ELO family.

It is found in the endoplasmic reticulum membrane. It carries out the reaction an acyl-CoA + malonyl-CoA + H(+) = a 3-oxoacyl-CoA + CO2 + CoA. The protein operates within lipid metabolism; fatty acid biosynthesis. Its function is as follows. Involved in the synthesis of fatty acids. Elongates C14 fatty acids to C18. Required for the maintenance of the global lipidome profile in this parasite. The polypeptide is Fatty acid elongase 3 (Trypanosoma cruzi (strain CL Brener)).